Consider the following 346-residue polypeptide: Phosphoribosylformylglycinamidine cyclo-ligase (346 aa).

It belongs to the AIR synthase family.

It is found in the cytoplasm. It catalyses the reaction 2-formamido-N(1)-(5-O-phospho-beta-D-ribosyl)acetamidine + ATP = 5-amino-1-(5-phospho-beta-D-ribosyl)imidazole + ADP + phosphate + H(+). It functions in the pathway purine metabolism; IMP biosynthesis via de novo pathway; 5-amino-1-(5-phospho-D-ribosyl)imidazole from N(2)-formyl-N(1)-(5-phospho-D-ribosyl)glycinamide: step 2/2. The protein is Phosphoribosylformylglycinamidine cyclo-ligase of Bacillus mycoides (strain KBAB4) (Bacillus weihenstephanensis).